The chain runs to 177 residues: tRNA-splicing endonuclease (177 aa).

Catalysis depends on residues Y114, H123, and K154.

Belongs to the tRNA-intron endonuclease family. Archaeal short subfamily. In terms of assembly, homotetramer; although the tetramer contains four active sites, only two participate in the cleavage. Therefore, it should be considered as a dimer of dimers.

It carries out the reaction pretRNA = a 3'-half-tRNA molecule with a 5'-OH end + a 5'-half-tRNA molecule with a 2',3'-cyclic phosphate end + an intron with a 2',3'-cyclic phosphate and a 5'-hydroxyl terminus.. Its function is as follows. Endonuclease that removes tRNA introns. Cleaves pre-tRNA at the 5'- and 3'-splice sites to release the intron. The products are an intron and two tRNA half-molecules bearing 2',3' cyclic phosphate and 5'-OH termini. Recognizes a pseudosymmetric substrate in which 2 bulged loops of 3 bases are separated by a stem of 4 bp. The sequence is that of tRNA-splicing endonuclease from Methanococcus maripaludis (strain DSM 14266 / JCM 13030 / NBRC 101832 / S2 / LL).